Consider the following 299-residue polypeptide: Protein NSG2 (299 aa).

Topologically, residues 1 to 108 (MANRGEPDPK…PSRTRQTRQN (108 aa)) are cytoplasmic. Ser-90 bears the Phosphoserine mark. A helical transmembrane segment spans residues 109-129 (ILHYLQAVLILSLSGFAYHEL). Residues 130-161 (SRNLHDNHLLHPDFASRPLLLGVKLCNWLSNG) lie on the Lumenal side of the membrane. A helical membrane pass occupies residues 162–182 (VLPNWLGYGVEGLLFGSVVPI). Residues 183–237 (LDNIFQTEVVKSSVHHDSLTSVIRSINAMLGVTFGIRKIQWNSSLQAAGAWGLLN) lie on the Cytoplasmic side of the membrane. The helical transmembrane segment at 238 to 258 (IILWLFFDGSISMLMSCICIG) threads the bilayer. Over 259–268 (VGCCISCYKD) the chain is Lumenal. The chain crosses the membrane as a helical span at residues 269 to 289 (IIDGSQFLYFMDFYFLGSLMF). Topologically, residues 290-299 (GKLGRYLYSH) are cytoplasmic.

It belongs to the INSIG family.

The protein localises to the endoplasmic reticulum membrane. Stabilizes the HMG-CoA reductase HMG2 by preventing its HRD1-dependent degradation. Binds directly to the sterol-sensing domain (SSD)-containing transmembrane region of HMG2, promoting its folding to protect it from degradation. The polypeptide is Protein NSG2 (NSG2) (Saccharomyces cerevisiae (strain ATCC 204508 / S288c) (Baker's yeast)).